A 703-amino-acid chain; its full sequence is Lactococcin-G-processing and transport ATP-binding protein LagD (703 aa).

The region spanning Gln-7–Pro-132 is the Peptidase C39 domain. Cys-13 is an active-site residue. Residues Pro-153–Lys-435 enclose the ABC transmembrane type-1 domain. A run of 7 helical transmembrane segments spans residues Phe-162–Ile-182, Thr-189–Tyr-209, Met-224–Thr-244, Ala-267–Ile-287, Gln-291–Ile-311, Met-381–Asp-401, and Leu-409–Leu-429. The region spanning Ile-469 to Ala-703 is the ABC transporter domain. Gly-502 to Ser-509 serves as a coordination point for ATP.

It belongs to the ABC transporter superfamily. LagD family. In terms of assembly, homodimer.

The protein localises to the cell membrane. LagD (TC 3.A.1) is involved in processing the signal peptide and probably also in export of the bacteriocin lactococcin G. This chain is Lactococcin-G-processing and transport ATP-binding protein LagD (lagD), found in Lactococcus lactis subsp. lactis (Streptococcus lactis).